The primary structure comprises 446 residues: Exodeoxyribonuclease 7 large subunit (446 aa).

The protein belongs to the XseA family. As to quaternary structure, heterooligomer composed of large and small subunits.

Its subcellular location is the cytoplasm. It carries out the reaction Exonucleolytic cleavage in either 5'- to 3'- or 3'- to 5'-direction to yield nucleoside 5'-phosphates.. Functionally, bidirectionally degrades single-stranded DNA into large acid-insoluble oligonucleotides, which are then degraded further into small acid-soluble oligonucleotides. This Streptococcus pneumoniae (strain Taiwan19F-14) protein is Exodeoxyribonuclease 7 large subunit.